A 467-amino-acid polypeptide reads, in one-letter code: Dimethylamine methyltransferase MtbB1 (467 aa).

Residue O356 is a non-standard amino acid, pyrrolysine.

It belongs to the dimethylamine methyltransferase family. As to quaternary structure, may form homotetramers or homopentamers.

It catalyses the reaction Co(I)-[dimethylamine-specific corrinoid protein] + dimethylamine + H(+) = methyl-Co(III)-[dimethylamine-specific corrinoid protein] + methylamine. The protein operates within one-carbon metabolism; methanogenesis from dimethylamine. In terms of biological role, catalyzes the transfer of a methyl group from dimethylamine to the corrinoid cofactor of MtbC. The major or perhaps only DMA methyltransferase expressed under inducing conditions. This is Dimethylamine methyltransferase MtbB1 from Methanosarcina barkeri.